Consider the following 348-residue polypeptide: MTNPQGPPNDPSPWARPGDQGPLARPPASSEASTGRLRPGEPAGHIQEPVSPPTQPEQQPQTEHLAASHAHTRRSGRQAAHQAWDPTGLLAAQEEEPAAVKTKRRARRDPLTVFLVLIIVFSLVLAGLIGGELYARHVANSKVAQAVACVVKDQATASFGVAPLLLWQVATRHFTNISVETAGNQIRDAKGMQIKLTIQNVRLKNTPNSRGTIGALDATITWSSEGIKESVQNAIPILGAFVTSSVVTHPADGTVELKGLLNNITAKPIVAGKGLELQIINFNTLGFSLPKETVQSTLNEFTSSLTKNYPLGIHADSVQVTSTGVVSRFSTRDAAIPTGIQNPCFSHI.

Pro residues predominate over residues methionine 1–proline 11. The disordered stretch occupies residues methionine 1–alanine 83. The next 2 membrane-spanning stretches (helical) occupy residues leucine 111–glycine 131 and isoleucine 235–valine 255.

It is found in the cell membrane. This is an uncharacterized protein from Mycobacterium tuberculosis (strain CDC 1551 / Oshkosh).